Consider the following 254-residue polypeptide: Triosephosphate isomerase (254 aa).

Substrate is bound at residue 9 to 11 (NWK). The active-site Electrophile is the His96. Glu169 (proton acceptor) is an active-site residue. Residues Gly175, Ser215, and 236–237 (GG) contribute to the substrate site.

Belongs to the triosephosphate isomerase family. In terms of assembly, homodimer.

The protein resides in the cytoplasm. It catalyses the reaction D-glyceraldehyde 3-phosphate = dihydroxyacetone phosphate. It functions in the pathway carbohydrate biosynthesis; gluconeogenesis. The protein operates within carbohydrate degradation; glycolysis; D-glyceraldehyde 3-phosphate from glycerone phosphate: step 1/1. In terms of biological role, involved in the gluconeogenesis. Catalyzes stereospecifically the conversion of dihydroxyacetone phosphate (DHAP) to D-glyceraldehyde-3-phosphate (G3P). This Borrelia duttonii (strain Ly) protein is Triosephosphate isomerase.